A 68-amino-acid chain; its full sequence is Protein SrnB (68 aa).

The helical transmembrane segment at 23 to 42 (YALIGLLAVCATVLCFSLIF) threads the bilayer.

This sequence belongs to the Hok/Gef family.

The protein localises to the cell inner membrane. Functionally, toxic component of a type I toxin-antitoxin (TA) system. Its normal function is believed to be effective plasmid stabilization through postsegregational killing of cells that have lost the F plasmid. Promotes degradation of stable RNA in E.coli. In Escherichia coli (strain K12), this protein is Protein SrnB (srnB).